Here is a 1007-residue protein sequence, read N- to C-terminus: Glutamate receptor ionotropic, delta-2 (1007 aa).

An N-terminal signal peptide occupies residues methionine 1–alanine 23. The segment at aspartate 24–arginine 345 is interaction with CBLN1 homotrimer. The Extracellular segment spans residues aspartate 24–aspartate 566. 3 cysteine pairs are disulfide-bonded: cysteine 83/cysteine 355, cysteine 99/cysteine 131, and cysteine 298/cysteine 310. An N-linked (GlcNAc...) asparagine glycan is attached at asparagine 293. Asparagine 426 is a glycosylation site (N-linked (GlcNAc...) asparagine). 3 residues coordinate Ca(2+): glutamate 531, valine 534, and aspartate 535. Residues leucine 567 to leucine 587 traverse the membrane as a helical segment. The Cytoplasmic portion of the chain corresponds to asparagine 588 to glycine 635. A helical transmembrane segment spans residues alanine 636–leucine 656. The Extracellular segment spans residues threonine 657–serine 830. N-linked (GlcNAc...) asparagine glycans are attached at residues asparagine 713 and asparagine 716. Ca(2+) is bound by residues aspartate 753, aspartate 755, and serine 757. Residues phenylalanine 831–leucine 851 traverse the membrane as a helical segment. Residues glutamate 852–isoleucine 1007 are Cytoplasmic-facing. A Phosphoserine modification is found at serine 883. A Phosphothreonine modification is found at threonine 886. Serine 890 is modified (phosphoserine). The interval aspartate 921–proline 991 is interaction with AP4M1. A PDZ-binding motif is present at residues threonine 1005–isoleucine 1007. Serine 1006 carries the phosphoserine modification.

This sequence belongs to the glutamate-gated ion channel (TC 1.A.10.1) family. GRID2 subfamily. In terms of assembly, tetramer; dimer of dimers. Interacts with EML2, MAGI2 (via PDZ domains) and AP4M1. Interacts with BECN1, GOPC, GRID2IP, SHANK1 and SHANK2. Interacts with CBLN2, but not with CBLN4. Interacts with CBLN1 (via C1q domain); the interaction is CBLN1-NRX1 complex formation-dependent; CBLN1-binding is calcium-independent; CBLN1 hexamers anchor GRID2 N-terminal domain dimers to monomeric NRXN1 isoform beta; promotes synaptogenesis and mediates the D-Serine-dependent long term depression signals and AMPA receptor endocytosis.

It localises to the postsynaptic cell membrane. The catalysed reaction is Ca(2+)(in) = Ca(2+)(out). It carries out the reaction Na(+)(in) = Na(+)(out). Its function is as follows. Member of the ionotropic glutamate receptor family, which plays a crucial role in synaptic organization and signal transduction in the central nervous system. Although it shares structural features with ionotropic glutamate receptors, does not bind glutamate as a primary ligand. Promotes synaptogenesis and mediates the D-Serine-dependent long term depression signals and AMPA receptor endocytosis of cerebellar parallel fiber-Purkinje cell (PF-PC) synapses through the NRX1B-CBLN1-GRID2 triad complex. In the presence of neurexins and cerebellins, forms cation-selective channels that are proposed to be gated by glycine and D-serine. However, recent research disputes this ligand-gated cation channel activity. Cation-selective ion channel activity can be triggered by GRM1 in Purkinje cells. The polypeptide is Glutamate receptor ionotropic, delta-2 (GRID2) (Homo sapiens (Human)).